The chain runs to 162 residues: uncharacterized protein (162 aa).

Residues 6 to 24 (SYLISIFYIILITSETTAF) traverse the membrane as a helical segment.

The protein localises to the membrane. This is an uncharacterized protein from Caenorhabditis elegans.